The primary structure comprises 324 residues: MMSQQDLPTLFYSGKSNSAVPIISESELQTITAEPWLEISKKGLQLEGLNFDRQGQLFLLDVFEGNIFKVNPETKEIKRPFVSHKANPAAIKIHKDGRLFICYLGDFKSTGGIFAATENGDNIQDIIEDLSTEYCIDDMVFDSKGGFYFTDFRGYSTNPLGGVYYVTPDFKTVTPIIQNISVANGIALSTDEKVLWVTETTANRLHRIALEDDGVTIQPFGATIPYYFTGHEGPDSCCIDSDDNLYVAMYGQGRVLVFNKRGYPIGQILIPSRDEGHMLRSTHPQFIPGTNQLIICSNDIEMDGGSMLYTVNGFAKGHKSYQFQ.

Ca(2+) is bound by residues Glu-47, Ser-109, Gly-111, Asp-129, Thr-132, Tyr-134, Asp-137, Asn-184, Asp-235, and Ser-236. Asp-235 (proton donor) is an active-site residue.

This sequence belongs to the SMP-30/CGR1 family. It depends on Ca(2+) as a cofactor.

The protein resides in the cytoplasm. In terms of biological role, exhibits lactonase activity. Acts in cells with perturbed membrane integrity and is possibly related to the membrane homeostasis. This chain is Lactonase drp35 (drp35), found in Staphylococcus aureus (strain MRSA252).